The chain runs to 61 residues: Metallothionein-2B (61 aa).

An N-acetylmethionine modification is found at Met1. Residues 1–29 (MDPNCSCATGDSCTCASSCKCKECKCTSC) form a beta region. 20 residues coordinate a divalent metal cation: Cys5, Cys7, Cys13, Cys15, Cys19, Cys21, Cys24, Cys26, Cys29, Cys33, Cys34, Cys36, Cys37, Cys41, Cys44, Cys48, Cys50, Cys57, Cys59, and Cys60. Positions 30–61 (KKSCCSCCPAGCTKCAQGCICKGASDKCSCCA) are alpha.

This sequence belongs to the metallothionein superfamily. Type 1 family. As to quaternary structure, monomer.

Metallothioneins have a high content of cysteine residues that bind various heavy metals; these proteins are transcriptionally regulated by both heavy metals and glucocorticoids. This is Metallothionein-2B from Oryctolagus cuniculus (Rabbit).